Consider the following 261-residue polypeptide: Protein-ADP-ribose hydrolase (261 aa).

The region spanning 74–261 (ADLKPVTGRG…DEALYNKLMS (188 aa)) is the Macro domain. Positions 93, 94, and 107 each coordinate ADP-D-ribose. Cys-113, His-118, and Cys-120 together coordinate Zn(2+). Cys-120, Ile-121, Asp-122, Ser-211, Thr-212, Gly-213, and Phe-215 together coordinate ADP-D-ribose.

It belongs to the MacroD-type family. Zn-Macro subfamily. Requires Zn(2+) as cofactor.

It catalyses the reaction 4-O-(ADP-D-ribosyl)-L-aspartyl-[protein] + H2O = L-aspartyl-[protein] + ADP-D-ribose + H(+). Functionally, ADP-ribosylhydrolase that specifically reverses the SirTM-mediated mono-ADP-ribosylation at an asparatate residue of GcvH-L, by releasing ADP-ribose from the target protein. May play a role in the regulation of the response to host-induced oxidative stress. The protein is Protein-ADP-ribose hydrolase of Treponema medium.